A 468-amino-acid polypeptide reads, in one-letter code: Probable Xaa-Pro aminopeptidase pepP (468 aa).

Positions 264, 275, 398, and 438 each coordinate Mn(2+).

It belongs to the peptidase M24B family. Mn(2+) is required as a cofactor.

It catalyses the reaction Release of any N-terminal amino acid, including proline, that is linked to proline, even from a dipeptide or tripeptide.. Its function is as follows. Catalyzes the removal of a penultimate prolyl residue from the N-termini of peptides. The protein is Probable Xaa-Pro aminopeptidase pepP (pepP) of Talaromyces stipitatus (strain ATCC 10500 / CBS 375.48 / QM 6759 / NRRL 1006) (Penicillium stipitatum).